The primary structure comprises 393 residues: S-adenosylmethionine synthase 2 (393 aa).

E9 is a binding site for Mg(2+). H15 is a binding site for ATP. E43 contacts K(+). L-methionine-binding residues include E56 and Q99. Residues 167-169 (DGK), 235-238 (SGRF), D246, 252-253 (RK), A269, K273, and K277 each bind ATP. Position 246 (D246) interacts with L-methionine. K277 is an L-methionine binding site.

Belongs to the AdoMet synthase family. As to quaternary structure, homotetramer. Mn(2+) serves as cofactor. The cofactor is Mg(2+). It depends on Co(2+) as a cofactor. Requires K(+) as cofactor. Roots and shoots.

It is found in the cytoplasm. The enzyme catalyses L-methionine + ATP + H2O = S-adenosyl-L-methionine + phosphate + diphosphate. The protein operates within amino-acid biosynthesis; S-adenosyl-L-methionine biosynthesis; S-adenosyl-L-methionine from L-methionine: step 1/1. Catalyzes the formation of S-adenosylmethionine from methionine and ATP. The reaction comprises two steps that are both catalyzed by the same enzyme: formation of S-adenosylmethionine (AdoMet) and triphosphate, and subsequent hydrolysis of the triphosphate. This is S-adenosylmethionine synthase 2 (SAMS2) from Pinus contorta (Shore pine).